The chain runs to 307 residues: Cytochrome c1 1, heme protein, mitochondrial (307 aa).

A mitochondrion-targeting transit peptide spans 1 to 64 (MVGGGVIQQI…LLSFSTVASA (64 aa)). At 65–270 (DEAEHGLESP…EPEMEERKLM (206 aa)) the chain is on the mitochondrial intermembrane side. The Cytochrome c domain occupies 90 to 246 (ASIRRGHQVY…YEDGVPATEA (157 aa)). Heme c is bound by residues Cys-103, Cys-106, His-107, and Met-226. The chain crosses the membrane as a helical span at residues 271 to 288 (GFKWIFLLSLALLQAAYY). Residues 289 to 307 (RRLKWSVLKSRKLVLDVVN) are Mitochondrial matrix-facing.

It belongs to the cytochrome c family. In terms of assembly, component of the ubiquinol-cytochrome c oxidoreductase (cytochrome b-c1 complex, complex III, CIII), a multisubunit enzyme composed of 10 subunits. The complex is composed of 3 respiratory subunits cytochrome b (MT-CYB), cytochrome c1 (CYC1-1 or CYC1-2) and Rieske protein (UCR1-1 or UCR1-2), 2 core protein subunits MPPalpha1 (or MPPalpha2) and MPPB, and 5 low-molecular weight protein subunits QCR7-1 (or QCR7-2), UCRQ-1 (or UCRQ-2), QCR9, UCRY and probably QCR6-1 (or QCR6-2). The complex exists as an obligatory dimer and forms supercomplexes (SCs) in the inner mitochondrial membrane with NADH-ubiquinone oxidoreductase (complex I, CI), resulting in different assemblies (supercomplexes SCI(1)III(2) and SCI(2)III(4)). Binds 1 heme c group covalently per subunit.

The protein localises to the mitochondrion inner membrane. In terms of biological role, component of the ubiquinol-cytochrome c oxidoreductase, a multisubunit transmembrane complex that is part of the mitochondrial electron transport chain which drives oxidative phosphorylation. The respiratory chain contains 3 multisubunit complexes succinate dehydrogenase (complex II, CII), ubiquinol-cytochrome c oxidoreductase (cytochrome b-c1 complex, complex III, CIII) and cytochrome c oxidase (complex IV, CIV), that cooperate to transfer electrons derived from NADH and succinate to molecular oxygen, creating an electrochemical gradient over the inner membrane that drives transmembrane transport and the ATP synthase. The cytochrome b-c1 complex catalyzes electron transfer from ubiquinol to cytochrome c, linking this redox reaction to translocation of protons across the mitochondrial inner membrane, with protons being carried across the membrane as hydrogens on the quinol. In the process called Q cycle, 2 protons are consumed from the matrix, 4 protons are released into the intermembrane space and 2 electrons are passed to cytochrome c. Cytochrome c1 is a catalytic core subunit containing a c-type heme. It transfers electrons from the [2Fe-2S] iron-sulfur cluster of the Rieske protein to cytochrome c. This Arabidopsis thaliana (Mouse-ear cress) protein is Cytochrome c1 1, heme protein, mitochondrial (CYC1-1).